A 463-amino-acid chain; its full sequence is Paraneoplastic antigen Ma3 (463 aa).

The tract at residues 363–410 (VGAVPLPASGNSFDARPSQGYRRRRGRGQHRRGGVARAGSRGSRKRKR) is disordered. Over residues 383–396 (YRRRRGRGQHRRGG) the composition is skewed to basic residues. Residues 412–429 (TFCYSCGEDGHIRVQCIN) form a CCHC-type zinc finger. Residues 440 to 463 (KQAAVESGNGNWAWDKSHPKSKAK) are disordered.

This sequence belongs to the PNMA family. As to expression, expressed at high levels in the brain and testis. Expressed at lower levels in the heart, trachea and kidney.

The protein resides in the nucleus. Its subcellular location is the nucleolus. This Homo sapiens (Human) protein is Paraneoplastic antigen Ma3 (PNMA3).